The primary structure comprises 121 residues: Ribosome-binding factor A (121 aa).

The protein belongs to the RbfA family. As to quaternary structure, monomer. Binds 30S ribosomal subunits, but not 50S ribosomal subunits or 70S ribosomes.

The protein resides in the cytoplasm. In terms of biological role, one of several proteins that assist in the late maturation steps of the functional core of the 30S ribosomal subunit. Associates with free 30S ribosomal subunits (but not with 30S subunits that are part of 70S ribosomes or polysomes). Required for efficient processing of 16S rRNA. May interact with the 5'-terminal helix region of 16S rRNA. The protein is Ribosome-binding factor A of Finegoldia magna (strain ATCC 29328 / DSM 20472 / WAL 2508) (Peptostreptococcus magnus).